The primary structure comprises 178 residues: ATP synthase subunit delta (178 aa).

The protein belongs to the ATPase delta chain family. F-type ATPases have 2 components, F(1) - the catalytic core - and F(0) - the membrane proton channel. F(1) has five subunits: alpha(3), beta(3), gamma(1), delta(1), epsilon(1). F(0) has three main subunits: a(1), b(2) and c(10-14). The alpha and beta chains form an alternating ring which encloses part of the gamma chain. F(1) is attached to F(0) by a central stalk formed by the gamma and epsilon chains, while a peripheral stalk is formed by the delta and b chains.

It is found in the cell membrane. In terms of biological role, f(1)F(0) ATP synthase produces ATP from ADP in the presence of a proton or sodium gradient. F-type ATPases consist of two structural domains, F(1) containing the extramembraneous catalytic core and F(0) containing the membrane proton channel, linked together by a central stalk and a peripheral stalk. During catalysis, ATP synthesis in the catalytic domain of F(1) is coupled via a rotary mechanism of the central stalk subunits to proton translocation. Its function is as follows. This protein is part of the stalk that links CF(0) to CF(1). It either transmits conformational changes from CF(0) to CF(1) or is implicated in proton conduction. This chain is ATP synthase subunit delta, found in Lysinibacillus sphaericus (strain C3-41).